The primary structure comprises 29 residues: Snake venom metalloproteinase bothrolysin (29 aa).

One can recognise a Peptidase M12B domain in the interval 6-29 (RYIELFLVVDSGMFMKYNGNSDKI). Glu9 is a binding site for Ca(2+).

Belongs to the venom metalloproteinase (M12B) family. It depends on Zn(2+) as a cofactor. In terms of tissue distribution, expressed by the venom gland.

Its subcellular location is the secreted. The catalysed reaction is Cleavage of 4-Gln-|-His-5, 9-Ser-|-His-10 and 14-Ala-|-Leu-15 of insulin B chain and Pro-|-Phe of angiotensin I.. Its function is as follows. Snake venom zinc metalloproteinase that impairs hemostasis in the envenomed animal. The chain is Snake venom metalloproteinase bothrolysin from Bothrops jararaca (Jararaca).